A 679-amino-acid chain; its full sequence is ATP-dependent zinc metalloprotease FtsH (679 aa).

Residues 1–6 (MNRIFR) lie on the Cytoplasmic side of the membrane. The helical transmembrane segment at 7 to 27 (NTIFYLLIFLVIVGIVSVFNS) threads the bilayer. The Extracellular portion of the chain corresponds to 28 to 114 (DQTETENVSF…IEPADETSGW (87 aa)). A helical transmembrane segment spans residues 115–135 (VQFFTGIIPFIIIFILFFFLL). Residues 136 to 679 (SQAQGGGSRV…SFEDDTNKKE (544 aa)) are Cytoplasmic-facing. ATP is bound at residue 206–213 (GPPGTGKT). His428 lines the Zn(2+) pocket. Glu429 is an active-site residue. Zn(2+) is bound by residues His432 and Asp504. Basic and acidic residues-rich tracts occupy residues 621 to 642 (LEKE…KEET) and 658 to 679 (PIEK…NKKE). The interval 621 to 679 (LEKEKASESDVKVNINSKKEETPQVEAEQPQEPNTDEPIEKDPSVEDNRSFEDDTNKKE) is disordered.

The protein in the central section; belongs to the AAA ATPase family. This sequence in the C-terminal section; belongs to the peptidase M41 family. In terms of assembly, homohexamer. Zn(2+) serves as cofactor.

The protein resides in the cell membrane. Functionally, acts as a processive, ATP-dependent zinc metallopeptidase for both cytoplasmic and membrane proteins. Plays a role in the quality control of integral membrane proteins. In Alkalihalophilus pseudofirmus (strain ATCC BAA-2126 / JCM 17055 / OF4) (Bacillus pseudofirmus), this protein is ATP-dependent zinc metalloprotease FtsH.